Here is a 278-residue protein sequence, read N- to C-terminus: Translation initiation factor IF-3, mitochondrial (278 aa).

The N-terminal 31 residues, methionine 1–lysine 31, are a transit peptide targeting the mitochondrion. The segment at lysine 249 to glutamine 278 is disordered.

The protein belongs to the IF-3 family.

It localises to the mitochondrion. IF-3 binds to the 28S ribosomal subunit and shifts the equilibrium between 55S ribosomes and their 39S and 28S subunits in favor of the free subunits, thus enhancing the availability of 28S subunits on which protein synthesis initiation begins. The protein is Translation initiation factor IF-3, mitochondrial (MTIF3) of Homo sapiens (Human).